A 433-amino-acid polypeptide reads, in one-letter code: 3-phosphoshikimate 1-carboxyvinyltransferase (433 aa).

Lysine 22, serine 23, and arginine 27 together coordinate 3-phosphoshikimate. Lysine 22 is a phosphoenolpyruvate binding site. Phosphoenolpyruvate contacts are provided by glycine 95 and arginine 123. Residues serine 166, glutamine 168, aspartate 314, and lysine 341 each coordinate 3-phosphoshikimate. Glutamine 168 serves as a coordination point for phosphoenolpyruvate. Aspartate 314 serves as the catalytic Proton acceptor. Arginine 345 and arginine 386 together coordinate phosphoenolpyruvate.

Belongs to the EPSP synthase family. Monomer.

It is found in the cytoplasm. The enzyme catalyses 3-phosphoshikimate + phosphoenolpyruvate = 5-O-(1-carboxyvinyl)-3-phosphoshikimate + phosphate. It functions in the pathway metabolic intermediate biosynthesis; chorismate biosynthesis; chorismate from D-erythrose 4-phosphate and phosphoenolpyruvate: step 6/7. Functionally, catalyzes the transfer of the enolpyruvyl moiety of phosphoenolpyruvate (PEP) to the 5-hydroxyl of shikimate-3-phosphate (S3P) to produce enolpyruvyl shikimate-3-phosphate and inorganic phosphate. The protein is 3-phosphoshikimate 1-carboxyvinyltransferase of Acidithiobacillus ferrooxidans (strain ATCC 23270 / DSM 14882 / CIP 104768 / NCIMB 8455) (Ferrobacillus ferrooxidans (strain ATCC 23270)).